A 346-amino-acid chain; its full sequence is 3',5'-cyclic-nucleotide phosphodiesterase (346 aa).

It belongs to the cyclic nucleotide phosphodiesterase class-II family.

It catalyses the reaction a nucleoside 3',5'-cyclic phosphate + H2O = a nucleoside 5'-phosphate + H(+). In Schizosaccharomyces pombe (strain 972 / ATCC 24843) (Fission yeast), this protein is 3',5'-cyclic-nucleotide phosphodiesterase (cgs2).